We begin with the raw amino-acid sequence, 607 residues long: Autophagy-related protein 22-2 (607 aa).

The segment at 1–29 is disordered; the sequence is MTVAPPSPNSPAAELQQRPPRYPGEDTTP. A helical membrane pass occupies residues 41–61; it reads YGIAAEVFAVCGVGSFLPLTL. N89 is a glycosylation site (N-linked (GlcNAc...) asparagine). Helical transmembrane passes span 119–139, 151–170, and 188–208; these read SFAM…LISF, TLLL…FVFI, and CLGS…ANDP. The interval 235–263 is disordered; sequence SFSASDAESGPHPAAEAGSGTSSGPASPE. A compositionally biased stretch (low complexity) spans 247 to 263; the sequence is PAAEAGSGTSSGPASPE. 4 helical membrane passes run 274 to 294, 307 to 327, 379 to 399, and 415 to 435; these read GVGL…SLLF, TLPL…FTMV, VLVF…VSGT, and VGLL…LWPV. N-linked (GlcNAc...) asparagine glycosylation is present at N445. The next 4 membrane-spanning stretches (helical) occupy residues 450–470, 485–507, 519–541, and 550–570; these read LCIA…IPVF, FPLA…SFFG, YALY…GMLI, and GFFF…IVNA. Residues 586–607 form a disordered region; sequence KGHETEMSEQTEEAEGLLARGI.

This sequence belongs to the ATG22 family.

It is found in the vacuole membrane. Functionally, vacuolar effluxer which mediate the efflux of amino acids resulting from autophagic degradation. The release of autophagic amino acids allows the maintenance of protein synthesis and viability during nitrogen starvation. The polypeptide is Autophagy-related protein 22-2 (atg22-2) (Aspergillus oryzae (strain ATCC 42149 / RIB 40) (Yellow koji mold)).